The primary structure comprises 256 residues: 5-keto-4-deoxy-D-glucarate aldolase (256 aa).

The active-site Proton acceptor is the His50. Gln151 contributes to the substrate binding site. Glu153 contacts Mg(2+). Positions 178 and 179 each coordinate substrate. Asp179 contacts Mg(2+).

It belongs to the HpcH/HpaI aldolase family. KDGluc aldolase subfamily. As to quaternary structure, homohexamer; trimer of dimers. Requires Mg(2+) as cofactor.

The enzyme catalyses 5-dehydro-4-deoxy-D-glucarate = 2-hydroxy-3-oxopropanoate + pyruvate. The catalysed reaction is 2-dehydro-3-deoxy-D-glucarate = 2-hydroxy-3-oxopropanoate + pyruvate. It functions in the pathway carbohydrate acid metabolism; galactarate degradation; D-glycerate from galactarate: step 2/3. Functionally, catalyzes the reversible retro-aldol cleavage of both 5-keto-4-deoxy-D-glucarate and 2-keto-3-deoxy-D-glucarate to pyruvate and tartronic semialdehyde. The polypeptide is 5-keto-4-deoxy-D-glucarate aldolase (Klebsiella pneumoniae subsp. pneumoniae (strain ATCC 700721 / MGH 78578)).